A 402-amino-acid polypeptide reads, in one-letter code: Meiosis-specific cyclin rem1 (402 aa).

This sequence belongs to the cyclin family. Cyclin AB subfamily.

Its function is as follows. Required for pre-meiotic DNA synthesis and S phase progression. Regulates levels of meiotic intragenic recombination. The chain is Meiosis-specific cyclin rem1 (rem1) from Schizosaccharomyces pombe (strain 972 / ATCC 24843) (Fission yeast).